Reading from the N-terminus, the 44-residue chain is Cytochrome b559 subunit beta (44 aa).

A helical membrane pass occupies residues 19-35; sequence WLSIHALAVPTIFFLGS. His23 contacts heme.

It belongs to the PsbE/PsbF family. Heterodimer of an alpha subunit and a beta subunit. PSII is composed of 1 copy each of membrane proteins PsbA, PsbB, PsbC, PsbD, PsbE, PsbF, PsbH, PsbI, PsbJ, PsbK, PsbL, PsbM, PsbT, PsbX, PsbY, PsbZ, Psb30/Ycf12, at least 3 peripheral proteins of the oxygen-evolving complex and a large number of cofactors. It forms dimeric complexes. It depends on heme b as a cofactor.

The protein localises to the plastid. It is found in the chloroplast thylakoid membrane. In terms of biological role, this b-type cytochrome is tightly associated with the reaction center of photosystem II (PSII). PSII is a light-driven water:plastoquinone oxidoreductase that uses light energy to abstract electrons from H(2)O, generating O(2) and a proton gradient subsequently used for ATP formation. It consists of a core antenna complex that captures photons, and an electron transfer chain that converts photonic excitation into a charge separation. The protein is Cytochrome b559 subunit beta of Tetradesmus obliquus (Green alga).